The sequence spans 411 residues: Peptidase T (411 aa).

H78 provides a ligand contact to Zn(2+). The active site involves D80. D140 provides a ligand contact to Zn(2+). Residue E173 is the Proton acceptor of the active site. Residues E174, D196, and H379 each contribute to the Zn(2+) site.

The protein belongs to the peptidase M20B family. It depends on Zn(2+) as a cofactor.

Its subcellular location is the cytoplasm. It carries out the reaction Release of the N-terminal residue from a tripeptide.. Its function is as follows. Cleaves the N-terminal amino acid of tripeptides. This is Peptidase T from Yersinia pseudotuberculosis serotype O:3 (strain YPIII).